The following is a 673-amino-acid chain: Protein transport Sec1a (673 aa).

The interval 538-591 (SSHKEESEARTGSVRKSSAPTAVPERKATPHSMRSRRTATWARPHSSDDGYSSD) is disordered.

Belongs to the STXBP/unc-18/SEC1 family. Does not bind the syntaxin KNOLLE.

Involved in the vesicle trafficking. Binds syntaxins. This is Protein transport Sec1a (SEC1A) from Arabidopsis thaliana (Mouse-ear cress).